The primary structure comprises 280 residues: Bifunctional protein FolD (280 aa).

NADP(+)-binding positions include 166 to 168 and Ser191; that span reads GRS.

It belongs to the tetrahydrofolate dehydrogenase/cyclohydrolase family. As to quaternary structure, homodimer.

The catalysed reaction is (6R)-5,10-methylene-5,6,7,8-tetrahydrofolate + NADP(+) = (6R)-5,10-methenyltetrahydrofolate + NADPH. It carries out the reaction (6R)-5,10-methenyltetrahydrofolate + H2O = (6R)-10-formyltetrahydrofolate + H(+). It functions in the pathway one-carbon metabolism; tetrahydrofolate interconversion. In terms of biological role, catalyzes the oxidation of 5,10-methylenetetrahydrofolate to 5,10-methenyltetrahydrofolate and then the hydrolysis of 5,10-methenyltetrahydrofolate to 10-formyltetrahydrofolate. This is Bifunctional protein FolD from Saccharophagus degradans (strain 2-40 / ATCC 43961 / DSM 17024).